A 383-amino-acid polypeptide reads, in one-letter code: 8-amino-7-oxononanoate synthase (383 aa).

Residue R22 participates in substrate binding. Pyridoxal 5'-phosphate is bound at residue G109–F110. Residue H134 coordinates substrate. Pyridoxal 5'-phosphate-binding residues include S178, H206, and T232. Residue K235 is modified to N6-(pyridoxal phosphate)lysine. T348 is a binding site for substrate.

The protein belongs to the class-II pyridoxal-phosphate-dependent aminotransferase family. BioF subfamily. Homodimer. Requires pyridoxal 5'-phosphate as cofactor.

It carries out the reaction 6-carboxyhexanoyl-[ACP] + L-alanine + H(+) = (8S)-8-amino-7-oxononanoate + holo-[ACP] + CO2. Its pathway is cofactor biosynthesis; biotin biosynthesis. Catalyzes the decarboxylative condensation of pimeloyl-[acyl-carrier protein] and L-alanine to produce 8-amino-7-oxononanoate (AON), [acyl-carrier protein], and carbon dioxide. The chain is 8-amino-7-oxononanoate synthase from Vibrio campbellii (strain ATCC BAA-1116).